The primary structure comprises 108 residues: Histone H4 (108 aa).

The tract at residues 1–24 is disordered; the sequence is MTGRGKGGKVLSLGGKGGKGAKRH. The DNA-binding element occupies 17 to 21; sequence GGKGA.

The protein belongs to the histone H4 family. The nucleosome is a histone octamer containing two molecules each of H2A, H2B, H3 and H4 assembled in one H3-H4 heterotetramer and two H2A-H2B heterodimers. The octamer wraps approximately 147 bp of DNA.

The protein resides in the nucleus. It is found in the chromosome. Its function is as follows. Core component of nucleosome. Nucleosomes wrap and compact DNA into chromatin, limiting DNA accessibility to the cellular machineries which require DNA as a template. Histones thereby play a central role in transcription regulation, DNA repair, DNA replication and chromosomal stability. DNA accessibility is regulated via a complex set of post-translational modifications of histones, also called histone code, and nucleosome remodeling. The polypeptide is Histone H4 (Mastigamoeba balamuthi (Phreatamoeba balamuthi)).